A 95-amino-acid polypeptide reads, in one-letter code: Histone-like DNA-binding protein (95 aa).

The protein belongs to the bacterial histone-like protein family.

The chain is Histone-like DNA-binding protein from Rickettsia felis (strain ATCC VR-1525 / URRWXCal2) (Rickettsia azadi).